A 225-amino-acid polypeptide reads, in one-letter code: ATP phosphoribosyltransferase (225 aa).

Belongs to the ATP phosphoribosyltransferase family. Short subfamily. Heteromultimer composed of HisG and HisZ subunits.

It localises to the cytoplasm. It catalyses the reaction 1-(5-phospho-beta-D-ribosyl)-ATP + diphosphate = 5-phospho-alpha-D-ribose 1-diphosphate + ATP. Its pathway is amino-acid biosynthesis; L-histidine biosynthesis; L-histidine from 5-phospho-alpha-D-ribose 1-diphosphate: step 1/9. Catalyzes the condensation of ATP and 5-phosphoribose 1-diphosphate to form N'-(5'-phosphoribosyl)-ATP (PR-ATP). Has a crucial role in the pathway because the rate of histidine biosynthesis seems to be controlled primarily by regulation of HisG enzymatic activity. This chain is ATP phosphoribosyltransferase, found in Herminiimonas arsenicoxydans.